The primary structure comprises 90 residues: Small ribosomal subunit protein bS20 (90 aa).

It belongs to the bacterial ribosomal protein bS20 family.

Binds directly to 16S ribosomal RNA. This is Small ribosomal subunit protein bS20 from Francisella tularensis subsp. tularensis (strain FSC 198).